The sequence spans 495 residues: 3-octaprenyl-4-hydroxybenzoate carboxy-lyase (495 aa).

Asparagine 171 is a binding site for Mn(2+). Prenylated FMN is bound by residues 174-176, 188-190, and 193-194; these read IYR, RWL, and RG. Glutamate 237 serves as a coordination point for Mn(2+). Aspartate 286 (proton donor) is an active-site residue.

This sequence belongs to the UbiD family. In terms of assembly, homohexamer. Prenylated FMN serves as cofactor. The cofactor is Mn(2+).

The protein resides in the cell membrane. The catalysed reaction is a 4-hydroxy-3-(all-trans-polyprenyl)benzoate + H(+) = a 2-(all-trans-polyprenyl)phenol + CO2. The protein operates within cofactor biosynthesis; ubiquinone biosynthesis. Its function is as follows. Catalyzes the decarboxylation of 3-octaprenyl-4-hydroxy benzoate to 2-octaprenylphenol, an intermediate step in ubiquinone biosynthesis. In Hamiltonella defensa subsp. Acyrthosiphon pisum (strain 5AT), this protein is 3-octaprenyl-4-hydroxybenzoate carboxy-lyase.